A 156-amino-acid chain; its full sequence is MEIIIIVLGIILDRVTKLWAIKRLSIGEDIVVIKDFFSFSYLENRGAAFGIFKDKQLFLISITMVAILLMMFYLFINKTNPKILKISLSLIISGAIGNLIDRIKYRYVVDFIFFHYKDKYHFPIFNIADVLVSLGTILLIIFIIKEDGYEDRKIFS.

2 helical membrane-spanning segments follow: residues 57–77 (LFLI…LFIN) and 83–103 (ILKI…IDRI). Active-site residues include Asp110 and Asp129. The chain crosses the membrane as a helical span at residues 124 to 144 (IFNIADVLVSLGTILLIIFII).

Belongs to the peptidase A8 family.

The protein resides in the cell membrane. It carries out the reaction Release of signal peptides from bacterial membrane prolipoproteins. Hydrolyzes -Xaa-Yaa-Zaa-|-(S,diacylglyceryl)Cys-, in which Xaa is hydrophobic (preferably Leu), and Yaa (Ala or Ser) and Zaa (Gly or Ala) have small, neutral side chains.. Its pathway is protein modification; lipoprotein biosynthesis (signal peptide cleavage). Its function is as follows. This protein specifically catalyzes the removal of signal peptides from prolipoproteins. This is Lipoprotein signal peptidase from Clostridium tetani (strain Massachusetts / E88).